A 237-amino-acid polypeptide reads, in one-letter code: Ribonuclease PH (237 aa).

Phosphate is bound by residues arginine 86 and glycine 124–arginine 126.

It belongs to the RNase PH family. As to quaternary structure, homohexameric ring arranged as a trimer of dimers.

It carries out the reaction tRNA(n+1) + phosphate = tRNA(n) + a ribonucleoside 5'-diphosphate. Its function is as follows. Phosphorolytic 3'-5' exoribonuclease that plays an important role in tRNA 3'-end maturation. Removes nucleotide residues following the 3'-CCA terminus of tRNAs; can also add nucleotides to the ends of RNA molecules by using nucleoside diphosphates as substrates, but this may not be physiologically important. Probably plays a role in initiation of 16S rRNA degradation (leading to ribosome degradation) during starvation. The chain is Ribonuclease PH from Shewanella sediminis (strain HAW-EB3).